Reading from the N-terminus, the 209-residue chain is Uracil phosphoribosyltransferase (209 aa).

5-phospho-alpha-D-ribose 1-diphosphate is bound by residues Arg79, Arg104, and 131 to 139 (DPMLATGGS). Uracil contacts are provided by residues Ile194 and 199–201 (GDA). Asp200 is a binding site for 5-phospho-alpha-D-ribose 1-diphosphate.

Belongs to the UPRTase family. Requires Mg(2+) as cofactor.

It carries out the reaction UMP + diphosphate = 5-phospho-alpha-D-ribose 1-diphosphate + uracil. It functions in the pathway pyrimidine metabolism; UMP biosynthesis via salvage pathway; UMP from uracil: step 1/1. Its activity is regulated as follows. Allosterically activated by GTP. Catalyzes the conversion of uracil and 5-phospho-alpha-D-ribose 1-diphosphate (PRPP) to UMP and diphosphate. This is Uracil phosphoribosyltransferase from Clostridium novyi (strain NT).